We begin with the raw amino-acid sequence, 291 residues long: Probable endonuclease 4 (291 aa).

Residues His-72, His-112, Glu-147, Asp-181, His-184, His-215, Asp-228, His-230, and Glu-260 each contribute to the Zn(2+) site.

The protein belongs to the AP endonuclease 2 family. Requires Zn(2+) as cofactor.

It carries out the reaction Endonucleolytic cleavage to 5'-phosphooligonucleotide end-products.. Its function is as follows. Endonuclease IV plays a role in DNA repair. It cleaves phosphodiester bonds at apurinic or apyrimidinic (AP) sites, generating a 3'-hydroxyl group and a 5'-terminal sugar phosphate. This is Probable endonuclease 4 from Mycoplasma genitalium (strain ATCC 33530 / DSM 19775 / NCTC 10195 / G37) (Mycoplasmoides genitalium).